The following is a 619-amino-acid chain: ATP-dependent zinc metalloprotease FtsH (619 aa).

Topologically, residues 1 to 11 are cytoplasmic; the sequence is MSNTDPQPPQK. The helical transmembrane segment at 12–32 threads the bilayer; it reads LPLNWVVWTLAVALMLYYLPA. Topologically, residues 33–120 are periplasmic; the sequence is MRDRPEPAIK…EVKEGHDASS (88 aa). A helical transmembrane segment spans residues 121-141; it reads SKVILLSYLPWIMFMIILFWL. Residues 142–619 lie on the Cytoplasmic side of the membrane; that stretch reads SRRTFRNFSG…IDECLQTGAS (478 aa). Position 216-223 (216-223) interacts with ATP; it reads GPPGTGKT. A Zn(2+)-binding site is contributed by His437. The active site involves Glu438. The Zn(2+) site is built by His441 and Asp513.

It in the central section; belongs to the AAA ATPase family. The protein in the C-terminal section; belongs to the peptidase M41 family. In terms of assembly, homohexamer. The cofactor is Zn(2+).

The protein resides in the cell inner membrane. Its function is as follows. Acts as a processive, ATP-dependent zinc metallopeptidase for both cytoplasmic and membrane proteins. Plays a role in the quality control of integral membrane proteins. The protein is ATP-dependent zinc metalloprotease FtsH of Hahella chejuensis (strain KCTC 2396).